The primary structure comprises 178 residues: Small ribosomal subunit protein uS4 (178 aa).

The S4 RNA-binding domain maps to 104–166 (RRLQTIVFRK…SNSPMASENH (63 aa)). Residues 158–178 (NSPMASENHPERTAATSEENQ) are disordered.

Belongs to the universal ribosomal protein uS4 family. Part of the 30S ribosomal subunit. Contacts protein S5. The interaction surface between S4 and S5 is involved in control of translational fidelity.

Its function is as follows. One of the primary rRNA binding proteins, it binds directly to 16S rRNA where it nucleates assembly of the body of the 30S subunit. With S5 and S12 plays an important role in translational accuracy. The sequence is that of Small ribosomal subunit protein uS4 from Methanococcus maripaludis (strain DSM 14266 / JCM 13030 / NBRC 101832 / S2 / LL).